The chain runs to 306 residues: MNEFINFDEISRETWQNLYNTSIAPLTHDELESIRSLNDEISLQDVEDVYLPLIHLLRLYKKNLEDMSYSKGLFLQKIVKTPPLIIGISGSVAVGKSTTARLLQLLLSRAFPKLTVDLVTTDGFLYTTDDLKNMGILDRKGFPESYDMEKLTSFLYHVKNGERFEVPIYSHETYDILPNQSQIIDSPDILIVEGINVLQNPQNQLLYISDFYDFSIYVDADEKLIEKWYLERFDSLLKLAKYDQTNFYHQFTKMPEDKVLNLARETWARVNRVNLREYIEPTRNRAEIILHKAENHHIDKIYLKKF.

90-97 (GSVAVGKS) lines the ATP pocket.

This sequence belongs to the prokaryotic pantothenate kinase family.

The protein resides in the cytoplasm. The enzyme catalyses (R)-pantothenate + ATP = (R)-4'-phosphopantothenate + ADP + H(+). It participates in cofactor biosynthesis; coenzyme A biosynthesis; CoA from (R)-pantothenate: step 1/5. The protein is Pantothenate kinase of Lactococcus lactis subsp. cremoris (strain MG1363).